A 295-amino-acid chain; its full sequence is Shikimate dehydrogenase (NADP(+)) (295 aa).

Shikimate contacts are provided by residues 18 to 20 (SRS) and T66. Residue K70 is the Proton acceptor of the active site. Shikimate is bound by residues N91 and D106. NADP(+) contacts are provided by residues 130 to 134 (GNGGA) and M235. Position 237 (Y237) interacts with shikimate. G258 contributes to the NADP(+) binding site.

The protein belongs to the shikimate dehydrogenase family. As to quaternary structure, homodimer.

The enzyme catalyses shikimate + NADP(+) = 3-dehydroshikimate + NADPH + H(+). It participates in metabolic intermediate biosynthesis; chorismate biosynthesis; chorismate from D-erythrose 4-phosphate and phosphoenolpyruvate: step 4/7. Its function is as follows. Involved in the biosynthesis of the chorismate, which leads to the biosynthesis of aromatic amino acids. Catalyzes the reversible NADPH linked reduction of 3-dehydroshikimate (DHSA) to yield shikimate (SA). This chain is Shikimate dehydrogenase (NADP(+)), found in Chlorobium phaeobacteroides (strain DSM 266 / SMG 266 / 2430).